A 199-amino-acid polypeptide reads, in one-letter code: Adenosylcobinamide-GDP ribazoletransferase (199 aa).

The next 2 helical transmembrane spans lie at 2–22 and 61–81; these read LAGG…VFAV and IAAV…VAAL.

Belongs to the CobS family. The cofactor is Mg(2+).

The protein localises to the cell membrane. It catalyses the reaction alpha-ribazole + adenosylcob(III)inamide-GDP = adenosylcob(III)alamin + GMP + H(+). The catalysed reaction is alpha-ribazole 5'-phosphate + adenosylcob(III)inamide-GDP = adenosylcob(III)alamin 5'-phosphate + GMP + H(+). It functions in the pathway cofactor biosynthesis; adenosylcobalamin biosynthesis; adenosylcobalamin from cob(II)yrinate a,c-diamide: step 7/7. In terms of biological role, joins adenosylcobinamide-GDP and alpha-ribazole to generate adenosylcobalamin (Ado-cobalamin). Also synthesizes adenosylcobalamin 5'-phosphate from adenosylcobinamide-GDP and alpha-ribazole 5'-phosphate. This Halobacterium salinarum (strain ATCC 700922 / JCM 11081 / NRC-1) (Halobacterium halobium) protein is Adenosylcobinamide-GDP ribazoletransferase.